The sequence spans 89 residues: MAHKKSGGSSRNGRDSNPKYLGVKKYGGEVVVPGMIIVRQRGTVKWPGKGVGMGKDHTLFALKGGKVEYAHKSGGRIYVNIVQMADAAE.

Residues 1–21 (MAHKKSGGSSRNGRDSNPKYL) are disordered.

This sequence belongs to the bacterial ribosomal protein bL27 family.

The protein is Large ribosomal subunit protein bL27 of Hyphomonas neptunium (strain ATCC 15444).